The chain runs to 262 residues: ATP synthase subunit a (262 aa).

5 consecutive transmembrane segments (helical) span residues 26–46 (VHID…FVFS), 86–106 (VAPL…IDLI), 130–150 (DISA…FYTI), 204–226 (LIFI…GIPL), and 240–260 (LQAF…YNKA).

It belongs to the ATPase A chain family. As to quaternary structure, F-type ATPases have 2 components, CF(1) - the catalytic core - and CF(0) - the membrane proton channel. CF(1) has five subunits: alpha(3), beta(3), gamma(1), delta(1), epsilon(1). CF(0) has three main subunits: a(1), b(2) and c(9-12). The alpha and beta chains form an alternating ring which encloses part of the gamma chain. CF(1) is attached to CF(0) by a central stalk formed by the gamma and epsilon chains, while a peripheral stalk is formed by the delta and b chains.

The protein resides in the cell inner membrane. Its function is as follows. Key component of the proton channel; it plays a direct role in the translocation of protons across the membrane. In Haemophilus influenzae (strain 86-028NP), this protein is ATP synthase subunit a.